A 69-amino-acid polypeptide reads, in one-letter code: Proteinase inhibitor (69 aa).

At S1 the chain carries N-acetylserine. An intrachain disulfide couples C4 to C49.

In terms of biological role, in vitro, strong inhibitor of bovine beta-trypsin, weak inhibitor of alpha-chymotrypsin, subtilisin BPN', subtilisin Carlsberg and cathepsin G. This chain is Proteinase inhibitor, found in Linum usitatissimum (Flax).